Reading from the N-terminus, the 148-residue chain is Ribosome-binding factor A (148 aa).

Positions 120 to 148 (AKAREGASYAGDADPYRTAEPDADDAPRA) are disordered. Positions 133–148 (DPYRTAEPDADDAPRA) are enriched in basic and acidic residues.

The protein belongs to the RbfA family. As to quaternary structure, monomer. Binds 30S ribosomal subunits, but not 50S ribosomal subunits or 70S ribosomes.

Its subcellular location is the cytoplasm. One of several proteins that assist in the late maturation steps of the functional core of the 30S ribosomal subunit. Associates with free 30S ribosomal subunits (but not with 30S subunits that are part of 70S ribosomes or polysomes). Required for efficient processing of 16S rRNA. May interact with the 5'-terminal helix region of 16S rRNA. This chain is Ribosome-binding factor A, found in Micrococcus luteus (strain ATCC 4698 / DSM 20030 / JCM 1464 / CCM 169 / CCUG 5858 / IAM 1056 / NBRC 3333 / NCIMB 9278 / NCTC 2665 / VKM Ac-2230) (Micrococcus lysodeikticus).